The sequence spans 52 residues: MIPFPAQHEIFHAYIGRITPHSSRCIANMWHSAHFFHENSLSIMKTLVPWTL.

This is an uncharacterized protein from Saccharomyces cerevisiae (strain ATCC 204508 / S288c) (Baker's yeast).